A 166-amino-acid chain; its full sequence is CDP-archaeol synthase (166 aa).

The next 5 membrane-spanning stretches (helical) occupy residues 7–27 (LLLS…GPFI), 55–75 (LIVA…FFTA), 78–98 (TLIS…GAFI), 116–136 (LDFV…ITWY), and 138–158 (FLFI…VAYL).

This sequence belongs to the CDP-archaeol synthase family. It depends on Mg(2+) as a cofactor.

The protein localises to the cell membrane. It carries out the reaction 2,3-bis-O-(geranylgeranyl)-sn-glycerol 1-phosphate + CTP + H(+) = CDP-2,3-bis-O-(geranylgeranyl)-sn-glycerol + diphosphate. Its pathway is membrane lipid metabolism; glycerophospholipid metabolism. In terms of biological role, catalyzes the formation of CDP-2,3-bis-(O-geranylgeranyl)-sn-glycerol (CDP-archaeol) from 2,3-bis-(O-geranylgeranyl)-sn-glycerol 1-phosphate (DGGGP) and CTP. This reaction is the third ether-bond-formation step in the biosynthesis of archaeal membrane lipids. The sequence is that of CDP-archaeol synthase from Saccharolobus islandicus (strain Y.N.15.51 / Yellowstone #2) (Sulfolobus islandicus).